The sequence spans 368 residues: Phospho-N-acetylmuramoyl-pentapeptide-transferase (368 aa).

The next 9 membrane-spanning stretches (helical) occupy residues 30-50 (AAAITALLISLMAGPWFIRYL), 72-92 (LPTMGGILIIFSIEVSVFLWA), 98-118 (HVWLVMLAIFWMGLIGFIDDY), 139-159 (ISLGLVIGLYTWFDPAFAVLL), 170-190 (LSIDYGIFYIPIVIFIITAVS), 201-221 (GLASGTTAIVVSALGAFSYLA), 238-258 (GGEIAVVCMAIVMACVGFLWF), 264-286 (EIIMGDTGSLALGSAVAVIALLI), and 345-365 (KIVIRFWIISILFFLTSLMTL).

It belongs to the glycosyltransferase 4 family. MraY subfamily. It depends on Mg(2+) as a cofactor.

The protein localises to the cell inner membrane. The enzyme catalyses UDP-N-acetyl-alpha-D-muramoyl-L-alanyl-gamma-D-glutamyl-meso-2,6-diaminopimeloyl-D-alanyl-D-alanine + di-trans,octa-cis-undecaprenyl phosphate = di-trans,octa-cis-undecaprenyl diphospho-N-acetyl-alpha-D-muramoyl-L-alanyl-D-glutamyl-meso-2,6-diaminopimeloyl-D-alanyl-D-alanine + UMP. It participates in cell wall biogenesis; peptidoglycan biosynthesis. Its function is as follows. Catalyzes the initial step of the lipid cycle reactions in the biosynthesis of the cell wall peptidoglycan: transfers peptidoglycan precursor phospho-MurNAc-pentapeptide from UDP-MurNAc-pentapeptide onto the lipid carrier undecaprenyl phosphate, yielding undecaprenyl-pyrophosphoryl-MurNAc-pentapeptide, known as lipid I. The protein is Phospho-N-acetylmuramoyl-pentapeptide-transferase of Chlorobium phaeobacteroides (strain DSM 266 / SMG 266 / 2430).